The following is a 77-amino-acid chain: EMBRYO SURROUNDING FACTOR 1-like protein 6 (77 aa).

A signal peptide spans 1–25 (MSPSHFAILFIIVISLVPLHGYANG). Cystine bridges form between Cys-38–Cys-53, Cys-43–Cys-72, Cys-51–Cys-68, and Cys-54–Cys-61.

The protein belongs to the MEG family.

This Arabidopsis thaliana (Mouse-ear cress) protein is EMBRYO SURROUNDING FACTOR 1-like protein 6 (ESFL6).